Consider the following 207-residue polypeptide: Holliday junction branch migration complex subunit RuvA (207 aa).

The tract at residues methionine 1–serine 63 is domain I. Residues glycine 64–alanine 142 form a domain II region. The segment at alanine 142–serine 146 is flexible linker. Residues alanine 147–arginine 207 form a domain III region.

The protein belongs to the RuvA family. In terms of assembly, homotetramer. Forms an RuvA(8)-RuvB(12)-Holliday junction (HJ) complex. HJ DNA is sandwiched between 2 RuvA tetramers; dsDNA enters through RuvA and exits via RuvB. An RuvB hexamer assembles on each DNA strand where it exits the tetramer. Each RuvB hexamer is contacted by two RuvA subunits (via domain III) on 2 adjacent RuvB subunits; this complex drives branch migration. In the full resolvosome a probable DNA-RuvA(4)-RuvB(12)-RuvC(2) complex forms which resolves the HJ.

It is found in the cytoplasm. In terms of biological role, the RuvA-RuvB-RuvC complex processes Holliday junction (HJ) DNA during genetic recombination and DNA repair, while the RuvA-RuvB complex plays an important role in the rescue of blocked DNA replication forks via replication fork reversal (RFR). RuvA specifically binds to HJ cruciform DNA, conferring on it an open structure. The RuvB hexamer acts as an ATP-dependent pump, pulling dsDNA into and through the RuvAB complex. HJ branch migration allows RuvC to scan DNA until it finds its consensus sequence, where it cleaves and resolves the cruciform DNA. The protein is Holliday junction branch migration complex subunit RuvA of Leifsonia xyli subsp. xyli (strain CTCB07).